Reading from the N-terminus, the 379-residue chain is Chaperone protein DnaJ (379 aa).

One can recognise a J domain in the interval 5–70; it reads DYYESLGVAK…QKRAAYDQYG (66 aa). A CR-type zinc finger spans residues 134 to 212; sequence GVTKEIRIPA…CHGHGRVEKS (79 aa). The Zn(2+) site is built by C147, C150, C164, C167, C186, C189, C200, and C203. CXXCXGXG motif repeat units follow at residues 147-154, 164-171, 186-193, and 200-207; these read CDVCHGNG, CPTCHGNG, CPHCHGRG, and CIKCHGHG.

It belongs to the DnaJ family. Homodimer. Requires Zn(2+) as cofactor.

It localises to the cytoplasm. Participates actively in the response to hyperosmotic and heat shock by preventing the aggregation of stress-denatured proteins and by disaggregating proteins, also in an autonomous, DnaK-independent fashion. Unfolded proteins bind initially to DnaJ; upon interaction with the DnaJ-bound protein, DnaK hydrolyzes its bound ATP, resulting in the formation of a stable complex. GrpE releases ADP from DnaK; ATP binding to DnaK triggers the release of the substrate protein, thus completing the reaction cycle. Several rounds of ATP-dependent interactions between DnaJ, DnaK and GrpE are required for fully efficient folding. Also involved, together with DnaK and GrpE, in the DNA replication of plasmids through activation of initiation proteins. The sequence is that of Chaperone protein DnaJ from Pectobacterium atrosepticum (strain SCRI 1043 / ATCC BAA-672) (Erwinia carotovora subsp. atroseptica).